A 471-amino-acid chain; its full sequence is ATP synthase subunit beta (471 aa).

156-163 (GGAGVGKT) serves as a coordination point for ATP.

This sequence belongs to the ATPase alpha/beta chains family. In terms of assembly, F-type ATPases have 2 components, CF(1) - the catalytic core - and CF(0) - the membrane proton channel. CF(1) has five subunits: alpha(3), beta(3), gamma(1), delta(1), epsilon(1). CF(0) has three main subunits: a(1), b(2) and c(9-12). The alpha and beta chains form an alternating ring which encloses part of the gamma chain. CF(1) is attached to CF(0) by a central stalk formed by the gamma and epsilon chains, while a peripheral stalk is formed by the delta and b chains.

It is found in the cell membrane. The catalysed reaction is ATP + H2O + 4 H(+)(in) = ADP + phosphate + 5 H(+)(out). In terms of biological role, produces ATP from ADP in the presence of a proton gradient across the membrane. The catalytic sites are hosted primarily by the beta subunits. The protein is ATP synthase subunit beta of Lysinibacillus sphaericus (strain C3-41).